The chain runs to 361 residues: tRNA-specific 2-thiouridylase MnmA (361 aa).

Residues 8-15 (GMSGGVDS) and Met-34 contribute to the ATP site. The interaction with target base in tRNA stretch occupies residues 94 to 96 (NPD). Catalysis depends on Cys-99, which acts as the Nucleophile. Cys-99 and Cys-195 are oxidised to a cystine. ATP is bound at residue Gly-123. Positions 145–147 (KDQ) are interaction with tRNA. Catalysis depends on Cys-195, which acts as the Cysteine persulfide intermediate. Residues 307–308 (RY) form an interaction with tRNA region.

It belongs to the MnmA/TRMU family.

It localises to the cytoplasm. It catalyses the reaction S-sulfanyl-L-cysteinyl-[protein] + uridine(34) in tRNA + AH2 + ATP = 2-thiouridine(34) in tRNA + L-cysteinyl-[protein] + A + AMP + diphosphate + H(+). Catalyzes the 2-thiolation of uridine at the wobble position (U34) of tRNA, leading to the formation of s(2)U34. This Legionella pneumophila (strain Lens) protein is tRNA-specific 2-thiouridylase MnmA.